The sequence spans 260 residues: MELTQPAEDLIQTQQTPASELGDPEDPGEEAADGSDTVVLSLFPCTPEPVNPEPDASVSSPQAGSSLKHSTTLTNRQRGNEVSALPATLDSLSIHQLAAQGELDQLKEHLRKGDNLVNKPDERGFTPLIWASAFGEIETVRFLLEWGADPHILAKERESALSLASTGGYTDIVGLLLERDVDINIYDWNGGTPLLYAVRGNHVKCVEALLARGADLTTEADSGYTPMDLAVALGYRKVQQVIENHILKLFQSNLVPADPE.

Residues 1 to 79 (MELTQPAEDL…STTLTNRQRG (79 aa)) form a disordered region. Acidic residues predominate over residues 22–33 (GDPEDPGEEAAD). The span at 57–77 (SVSSPQAGSSLKHSTTLTNRQ) shows a compositional bias: polar residues. 5 ANK repeats span residues 89-118 (LDSL…NLVN), 123-152 (RGFT…DPHI), 156-185 (ERES…DINI), 189-218 (NGGT…DLTT), and 222-251 (SGYT…KLFQ).

In terms of assembly, forms homodimers. The RFX heterotetrameric complex consists of 2 molecules of RFX5 and one each of RFXAP and RFX-B/RFXANK; with each subunit representing a separate complementation group. Interacts (via ankyrin repeats) with RFX5 (via PxLPxI/L motif); the interaction is direct. RFX forms cooperative DNA binding complexes with X2BP and CBF/NF-Y. RFX associates with CIITA to form an active transcriptional complex. Interacts with RAF1. Interacts (via ankyrin repeats) with RFX7 (via PxLPxI/L motif). Post-translationally, phosphorylated by RAF1. As to expression, ubiquitous.

The protein localises to the cytoplasm. It is found in the nucleus. Activates transcription from class II MHC promoters. Activation requires the activity of the MHC class II transactivator/CIITA. May regulate other genes in the cell. RFX binds the X1 box of MHC-II promoters. May also potentiate the activation of RAF1. Functionally, isoform 2 is not involved in the positive regulation of MHC class II genes. The sequence is that of DNA-binding protein RFXANK (RFXANK) from Homo sapiens (Human).